The sequence spans 90 residues: Small ribosomal subunit protein uS15 (90 aa).

It belongs to the universal ribosomal protein uS15 family. Part of the 30S ribosomal subunit. Forms a bridge to the 50S subunit in the 70S ribosome, contacting the 23S rRNA.

In terms of biological role, one of the primary rRNA binding proteins, it binds directly to 16S rRNA where it helps nucleate assembly of the platform of the 30S subunit by binding and bridging several RNA helices of the 16S rRNA. Its function is as follows. Forms an intersubunit bridge (bridge B4) with the 23S rRNA of the 50S subunit in the ribosome. The protein is Small ribosomal subunit protein uS15 of Aliarcobacter butzleri (strain RM4018) (Arcobacter butzleri).